Here is a 212-residue protein sequence, read N- to C-terminus: Thymidylate kinase (212 aa).

10–17 (GPDGAGKT) serves as a coordination point for ATP.

It belongs to the thymidylate kinase family.

The enzyme catalyses dTMP + ATP = dTDP + ADP. Its function is as follows. Phosphorylation of dTMP to form dTDP in both de novo and salvage pathways of dTTP synthesis. The polypeptide is Thymidylate kinase (Exiguobacterium sibiricum (strain DSM 17290 / CCUG 55495 / CIP 109462 / JCM 13490 / 255-15)).